The primary structure comprises 142 residues: Transcriptional regulator MraZ (142 aa).

SpoVT-AbrB domains lie at 5-47 (THTP…PTPE) and 76-119 (AHDE…DRVA).

It belongs to the MraZ family. As to quaternary structure, forms oligomers.

It is found in the cytoplasm. The protein localises to the nucleoid. The chain is Transcriptional regulator MraZ from Salinispora tropica (strain ATCC BAA-916 / DSM 44818 / JCM 13857 / NBRC 105044 / CNB-440).